A 131-amino-acid polypeptide reads, in one-letter code: Small ribosomal subunit protein uS8 (131 aa).

The protein belongs to the universal ribosomal protein uS8 family. Part of the 30S ribosomal subunit. Contacts proteins S5 and S12.

One of the primary rRNA binding proteins, it binds directly to 16S rRNA central domain where it helps coordinate assembly of the platform of the 30S subunit. The polypeptide is Small ribosomal subunit protein uS8 (Solibacter usitatus (strain Ellin6076)).